The following is a 181-amino-acid chain: Proteinase inhibitor B (181 aa).

The N-terminal stretch at M1 to G24 is a signal peptide. Disulfide bonds link C67/C113, C134/C143, and C136/C139.

Belongs to the protease inhibitor I3 (leguminous Kunitz-type inhibitor) family.

Its subcellular location is the secreted. Its function is as follows. Possesses two reactive sites. Inhibits two molecules of trypsin simultaneously. Inhibits efficiently kallikrein, but chymotrypsin weakly. The sequence is that of Proteinase inhibitor B from Sagittaria sagittifolia (Arrowhead).